A 221-amino-acid chain; its full sequence is 5'-nucleotidase (221 aa).

Asp-14 functions as the Nucleophile in the catalytic mechanism.

It belongs to the HAD-like hydrolase superfamily. The cofactor is Mn(2+). Mg(2+) serves as cofactor.

The catalysed reaction is a ribonucleoside 5'-phosphate + H2O = a ribonucleoside + phosphate. In terms of biological role, specifically dephosphorylates nucleoside 5'-monophosphates to nucleosides and inorganic phosphate. Displays high activity toward 5'-UMP and 5'-IMP, significant activity against 5'-XMP and 5'-TMP, and low activity against 5'-CMP. The polypeptide is 5'-nucleotidase (Pseudomonas aeruginosa (strain ATCC 15692 / DSM 22644 / CIP 104116 / JCM 14847 / LMG 12228 / 1C / PRS 101 / PAO1)).